Consider the following 188-residue polypeptide: Thymidine kinase (188 aa).

17 to 24 (GPMFAGKT) contributes to the ATP binding site. E92 acts as the Proton acceptor in catalysis. F121 contributes to the substrate binding site. Residues C146 and C149 each contribute to the Zn(2+) site. 166 to 170 (LILAG) is a substrate binding site. Residues C179 and C182 each coordinate Zn(2+).

Belongs to the thymidine kinase family.

It carries out the reaction thymidine + ATP = dTMP + ADP + H(+). In terms of biological role, phosphorylates thymidine. ASFV replicates in the cytoplasm of infected cells and contains genes encoding a number of enzymes needed for DNA synthesis, including thymidine kinase. Important for growth in swine macrophages in vitro and is a virus virulence factor in swine. The chain is Thymidine kinase from African swine fever virus (isolate Tick/South Africa/Pretoriuskop Pr4/1996) (ASFV).